The primary structure comprises 192 residues: Archaemetzincin (192 aa).

His137 is a binding site for Zn(2+). Glu138 functions as the Proton acceptor in the catalytic mechanism. Residues His141, His147, Cys148, Cys153, Cys172, and Cys175 each contribute to the Zn(2+) site.

The protein belongs to the peptidase M54 family. As to quaternary structure, monomer. Requires Zn(2+) as cofactor.

Its function is as follows. Probable zinc metalloprotease whose natural substrate is unknown. This Pyrococcus furiosus (strain ATCC 43587 / DSM 3638 / JCM 8422 / Vc1) protein is Archaemetzincin.